A 266-amino-acid chain; its full sequence is Regulatory protein RecX (266 aa).

Belongs to the RecX family.

The protein resides in the cytoplasm. Functionally, modulates RecA activity. This is Regulatory protein RecX from Leuconostoc citreum (strain KM20).